Reading from the N-terminus, the 341-residue chain is Putative UPF0607 protein ENSP00000383783 (341 aa).

Residues Glu75 to Arg101 show a composition bias toward basic and acidic residues. Disordered regions lie at residues Glu75–Leu115 and Gly216–Ala278. A compositionally biased stretch (low complexity) spans Ser234–His245.

Belongs to the UPF0607 family.

In Homo sapiens (Human), this protein is Putative UPF0607 protein ENSP00000383783.